Consider the following 1404-residue polypeptide: DNA-directed RNA polymerase subunit beta' (1404 aa).

Zn(2+)-binding residues include C70, C72, C85, and C88. D460, D462, and D464 together coordinate Mg(2+). Zn(2+)-binding residues include C814, C889, C896, and C899. The segment at 1377 to 1404 is disordered; sequence DSEMETLSGKPAAAEPVAAVADAGADEE. The span at 1387-1404 shows a compositional bias: low complexity; that stretch reads PAAAEPVAAVADAGADEE.

This sequence belongs to the RNA polymerase beta' chain family. In terms of assembly, the RNAP catalytic core consists of 2 alpha, 1 beta, 1 beta' and 1 omega subunit. When a sigma factor is associated with the core the holoenzyme is formed, which can initiate transcription. It depends on Mg(2+) as a cofactor. The cofactor is Zn(2+).

It carries out the reaction RNA(n) + a ribonucleoside 5'-triphosphate = RNA(n+1) + diphosphate. Functionally, DNA-dependent RNA polymerase catalyzes the transcription of DNA into RNA using the four ribonucleoside triphosphates as substrates. The chain is DNA-directed RNA polymerase subunit beta' from Xanthomonas euvesicatoria pv. vesicatoria (strain 85-10) (Xanthomonas campestris pv. vesicatoria).